The sequence spans 1234 residues: Protein Jumonji (1234 aa).

Basic residues predominate over residues methionine 1–isoleucine 11. 4 disordered regions span residues methionine 1–proline 22, alanine 68–arginine 150, leucine 169–threonine 339, and arginine 354–glycine 548. Phosphoserine is present on serine 78. A compositionally biased stretch (low complexity) spans serine 86–serine 98. The Nuclear localization signal signature appears at proline 104–arginine 110. A compositionally biased stretch (polar residues) spans phenylalanine 117–proline 129. Residues alanine 141 to proline 170 form a sufficient for interaction with the PRC2 complex region. Over residues glutamine 180 to glutamate 193 the composition is skewed to acidic residues. Residues alanine 197–proline 210 show a composition bias toward polar residues. Residues arginine 211 to asparagine 221 are compositionally biased toward basic residues. The segment covering lysine 244–glutamine 264 has biased composition (basic and acidic residues). The span at alanine 265–alanine 285 shows a compositional bias: low complexity. Composition is skewed to polar residues over residues serine 304 to alanine 322 and serine 369 to alanine 384. Lysine 378 carries the N6-acetyllysine modification. The span at cysteine 418–glutamate 440 shows a compositional bias: basic and acidic residues. A Phosphoserine modification is found at serine 449. 2 stretches are compositionally biased toward basic and acidic residues: residues valine 482–asparagine 494 and serine 529–serine 544. The region spanning isoleucine 555 to glutamate 596 is the JmjN domain. Residues tryptophan 619–proline 711 enclose the ARID domain. Residues glycine 872–proline 876 carry the GSGFP motif motif. One can recognise a JmjC domain in the interval proline 882 to lysine 1046. Residues glutamate 1206–serine 1234 are disordered.

This sequence belongs to the JARID2 family. In terms of assembly, associates with the PRC2 complex, which consists of the core components EED, EZH1 or EZH2, SUZ12, and RBBP4, and various combinations of accessory subunits including AEBP2, JARID2, PHF19, MTF2 and EPOP. Found in a monomeric PRC2.2 (class 2) complex consisting of at least SUZ12, RBBP4, AEBP2 and JARID2. Facilitates nucleosome binding of the PRC2 complex. Interacts with SUZ12 (via C2H2-type zinc finger domain); the interaction is direct; competes with EPOP for SUZ12 binding. Interacts with histone methyltransferases EHMT1/GLP1 and EHMT2/G9a. Interacts with GATA4 (via the N-terminal region). Interacts with NKX2-5 (via the C-terminal region). Interacts with RB1. Interacts with ZNF496. Interacts with ESRRB. Interacts with DDX18; this interaction inhibits the PRC2 complex. Widely expressed in embryos. In adults, expressed at high levels in heart, skeletal muscle, brain and thymus.

It localises to the nucleus. Functionally, regulator of histone methyltransferase complexes that plays an essential role in embryonic development, including heart and liver development, neural tube fusion process and hematopoiesis. Acts as an accessory subunit for the core PRC2 (Polycomb repressive complex 2) complex, which mediates histone H3K27 (H3K27me3) trimethylation on chromatin. Binds DNA and mediates the recruitment of the PRC2 complex to target genes in embryonic stem cells, thereby playing a key role in stem cell differentiation and normal embryonic development. In cardiac cells, it is required to repress expression of cyclin-D1 (CCND1) by activating methylation of 'Lys-9' of histone H3 (H3K9me) by the GLP1/EHMT1 and G9a/EHMT2 histone methyltransferases. Also acts as a transcriptional repressor of ANF via its interaction with GATA4 and NKX2-5. Participates in the negative regulation of cell proliferation signaling. Does not have histone demethylase activity. The polypeptide is Protein Jumonji (Jarid2) (Mus musculus (Mouse)).